We begin with the raw amino-acid sequence, 96 residues long: Myoglobin (96 aa).

The 96-residue stretch at 1 to 96 (GLSDGEWQLV…AKTKELGFLG (96 aa)) folds into the Globin domain. At S3 the chain carries Phosphoserine. Position 61 (H61) interacts with nitrite. H61 contributes to the O2 binding site. T64 is subject to Phosphothreonine.

This sequence belongs to the globin family. As to quaternary structure, monomeric.

The protein localises to the cytoplasm. It is found in the sarcoplasm. The catalysed reaction is Fe(III)-heme b-[protein] + nitric oxide + H2O = Fe(II)-heme b-[protein] + nitrite + 2 H(+). It carries out the reaction H2O2 + AH2 = A + 2 H2O. In terms of biological role, monomeric heme protein which primary function is to store oxygen and facilitate its diffusion within muscle tissues. Reversibly binds oxygen through a pentacoordinated heme iron and enables its timely and efficient release as needed during periods of heightened demand. Depending on the oxidative conditions of tissues and cells, and in addition to its ability to bind oxygen, it also has a nitrite reductase activity whereby it regulates the production of bioactive nitric oxide. Under stress conditions, like hypoxia and anoxia, it also protects cells against reactive oxygen species thanks to its pseudoperoxidase activity. In Ailuropoda melanoleuca (Giant panda), this protein is Myoglobin (MB).